The sequence spans 245 residues: tRNA (guanine-N(1)-)-methyltransferase (245 aa).

S-adenosyl-L-methionine is bound by residues G111 and 131 to 136 (IGDYVL).

Belongs to the RNA methyltransferase TrmD family. As to quaternary structure, homodimer.

It is found in the cytoplasm. The catalysed reaction is guanosine(37) in tRNA + S-adenosyl-L-methionine = N(1)-methylguanosine(37) in tRNA + S-adenosyl-L-homocysteine + H(+). Its function is as follows. Specifically methylates guanosine-37 in various tRNAs. This chain is tRNA (guanine-N(1)-)-methyltransferase, found in Caldicellulosiruptor saccharolyticus (strain ATCC 43494 / DSM 8903 / Tp8T 6331).